Consider the following 39-residue polypeptide: SGSETAKIGDGCFGLPIDRIGSASGMGCGSVPKPTPGGS.

Positions 1–8 are excised as a propeptide; it reads SGSETAKI. A disulfide bridge connects residues Cys12 and Cys28. O-linked (GalNAc...) threonine glycosylation is present at Thr35.

Belongs to the natriuretic peptide family. In terms of processing, O-linked glycans consist of galactosyl-beta(1-3)-N-acetylgalactosamine (Gal-GalNAc). Post-translationally, the synthetic non-glycosylated form shows higher potency on natriuretic receptors (EC(50)=672.90 nM) and NPR2 (EC(50)=261.0 nM). As to expression, expressed by the venom gland.

Its subcellular location is the secreted. Snake venom natriuretic peptide that targets both NPR1 (EC(50)=1080.0 nM) and NPR2 (EC(50)=328.60 nM). Exhibits hypotensive and vasodepressor activities. This chain is Natriuretic peptide TcNPa, found in Tropidechis carinatus (Australian rough-scaled snake).